The following is a 60-amino-acid chain: Large ribosomal subunit protein bL32 (60 aa).

Disordered stretches follow at residues 1–28 (MAVQ…PGIA) and 41–60 (HISP…KSEA). Positions 9–19 (SPSKRGMHRSH) are enriched in basic residues.

This sequence belongs to the bacterial ribosomal protein bL32 family.

The sequence is that of Large ribosomal subunit protein bL32 from Verminephrobacter eiseniae (strain EF01-2).